The primary structure comprises 447 residues: tRNA modification GTPase MnmE (447 aa).

Positions 24, 81, and 120 each coordinate (6S)-5-formyl-5,6,7,8-tetrahydrofolate. The TrmE-type G domain occupies 216–371; sequence GLNVVIAGKP…LRKELSDIAG (156 aa). Asparagine 226 contributes to the K(+) binding site. Residues 226–231, 245–251, and 270–273 each bind GTP; these read NAGKSS, TDIAGTT, and DTAG. Serine 230 contributes to the Mg(2+) binding site. Positions 245, 247, and 250 each coordinate K(+). Threonine 251 provides a ligand contact to Mg(2+). Residue lysine 447 participates in (6S)-5-formyl-5,6,7,8-tetrahydrofolate binding.

The protein belongs to the TRAFAC class TrmE-Era-EngA-EngB-Septin-like GTPase superfamily. TrmE GTPase family. Homodimer. Heterotetramer of two MnmE and two MnmG subunits. It depends on K(+) as a cofactor.

It is found in the cytoplasm. Exhibits a very high intrinsic GTPase hydrolysis rate. Involved in the addition of a carboxymethylaminomethyl (cmnm) group at the wobble position (U34) of certain tRNAs, forming tRNA-cmnm(5)s(2)U34. The chain is tRNA modification GTPase MnmE from Ruthia magnifica subsp. Calyptogena magnifica.